The sequence spans 177 residues: Large ribosomal subunit protein uL6 (177 aa).

This sequence belongs to the universal ribosomal protein uL6 family. Part of the 50S ribosomal subunit.

Its function is as follows. This protein binds to the 23S rRNA, and is important in its secondary structure. It is located near the subunit interface in the base of the L7/L12 stalk, and near the tRNA binding site of the peptidyltransferase center. The polypeptide is Large ribosomal subunit protein uL6 (Rickettsia typhi (strain ATCC VR-144 / Wilmington)).